The following is a 173-amino-acid chain: MKSLFIASTMVLMAFPAFAESTTVKMYEALPTGPGKEVGTVVISEAPGGLHFKVNMEKLTPGYHGFHVHENPSCAPGEKDGKIVPALAAGGHYDPGNTHHHLGPEGDGHMGDLPRLSANADGKVSETVVAPHLKKLAEIKQRSLMVHVGGDNYSDKPEPLGGGGARFACGVIE.

The N-terminal stretch at 1–19 is a signal peptide; it reads MKSLFIASTMVLMAFPAFA. Residues His-67, His-69, and His-92 each coordinate Cu cation. Cys-74 and Cys-169 form a disulfide bridge. Residues His-92, His-101, His-109, and Asp-112 each contribute to the Zn(2+) site. A Cu cation-binding site is contributed by His-147.

This sequence belongs to the Cu-Zn superoxide dismutase family. In terms of assembly, homodimer. The cofactor is Cu cation. Zn(2+) is required as a cofactor.

The protein localises to the periplasm. It carries out the reaction 2 superoxide + 2 H(+) = H2O2 + O2. In terms of biological role, destroys radicals which are normally produced within the cells and which are toxic to biological systems. This is Superoxide dismutase [Cu-Zn] (sodC) from Brucella abortus biovar 1 (strain 9-941).